The primary structure comprises 451 residues: Signal transduction histidine-protein kinase ArlS (451 aa).

Helical transmembrane passes span 11–31 and 156–176; these read IIVT…IIIF and IIAL…SYVF. The HAMP domain maps to 178–231; sequence TQITKPLVSLSNKMIEIRRDGFQNKLQLNTNYEEIDNLANTFNEMMSQIEESFN. The Histidine kinase domain occupies 239–451; the sequence is DASHELRTPL…NKGTTFKIIF (213 aa). His-242 carries the post-translational modification Phosphohistidine; by autocatalysis.

In terms of processing, autophosphorylated.

It is found in the cell membrane. The catalysed reaction is ATP + protein L-histidine = ADP + protein N-phospho-L-histidine.. Functionally, member of the two-component regulatory system ArlS/ArlR involved in the regulation of adhesion, autolysis, multidrug resistance and virulence. ArlS probably functions as a sensor protein kinase which is autophosphorylated at a histidine residue and transfers its phosphate group to ArlR. This Staphylococcus aureus (strain MRSA252) protein is Signal transduction histidine-protein kinase ArlS (arlS).